A 203-amino-acid chain; its full sequence is MAEGDNRSSNLLAVETASLEEQLQGWGEVMLMADKVLRWERAWFPPAIMGVVSLLFLIIYYLDPSVLSGVSCFVMFLCLADYLVPILAPRIFGSNKWTTEQQQRFHEICSNLVKTRRRAVGWWKRLFSLKEEKPKMYFMTMIISLAAVAWVGQQVHNLLLTYLIVTFVLLLPGLNQHGIILKYIGMAKREINKLLKQKEKKNE.

At Met1–Arg41 the chain is on the cytoplasmic side. A helical membrane pass occupies residues Ala42–Leu62. Residues Asp63–Ser65 are Lumenal-facing. Residues Val66–Ile86 form a helical membrane-spanning segment. Over Leu87–Lys133 the chain is Cytoplasmic. A helical membrane pass occupies residues Pro134 to Asn175. The Lumenal segment spans residues Gln176–Glu203.

The protein belongs to the ARL6ip family. In terms of assembly, homooligomer. Heterodimer with ARL6IP5. Interacts with ARL6. Interacts with TMEM33. Interacts with ATL1. Expressed in the cerebral cortex, cerebellum, hippocampus, olfactory bulbs, medulla oblongate and limbic system (at protein level). Ubiquitous. Expressed in all hematopoietic cell lineages, with highest levels in early myeloid progenitor cells.

The protein localises to the endomembrane system. The protein resides in the endoplasmic reticulum membrane. Its subcellular location is the endoplasmic reticulum. In terms of biological role, positively regulates SLC1A1/EAAC1-mediated glutamate transport by increasing its affinity for glutamate in a PKC activity-dependent manner. Promotes the catalytic efficiency of SLC1A1/EAAC1 probably by reducing its interaction with ARL6IP5, a negative regulator of SLC1A1/EAAC1-mediated glutamate transport. Plays a role in the formation and stabilization of endoplasmic reticulum tubules. Negatively regulates apoptosis, possibly by modulating the activity of caspase-9 (CASP9). Inhibits cleavage of CASP9-dependent substrates and downstream markers of apoptosis but not CASP9 itself. May be involved in protein transport, membrane trafficking, or cell signaling during hematopoietic maturation. This is ADP-ribosylation factor-like protein 6-interacting protein 1 (Arl6ip1) from Mus musculus (Mouse).